Consider the following 210-residue polypeptide: SAP domain-containing ribonucleoprotein (210 aa).

N-acetylalanine is present on Ala2. One can recognise an SAP domain in the interval 8-42; sequence LHKLKLAELKQECLARGLETKGIKQDLIHRLQAYL. An N6-acetyllysine modification is found at Lys10. A compositionally biased stretch (acidic residues) spans 45–64; the sequence is HAEEEANEEDVLGDETEEEE. Positions 45–86 are disordered; that stretch reads HAEEEANEEDVLGDETEEEETKPIELPVKEEEPPEKTVDVAA. Residues 65 to 86 are compositionally biased toward basic and acidic residues; it reads TKPIELPVKEEEPPEKTVDVAA. An N6-acetyllysine modification is found at Lys142. A disordered region spans residues 161-210; sequence VSSISRKSEDDEKLKKRKERFGIVTSSAGTGTTEDTEAKKRKRAERFGIA. Phosphoserine is present on Ser163. A compositionally biased stretch (polar residues) spans 184 to 193; it reads VTSSAGTGTT.

Belongs to the SAP domain-containing ribonucleoprotein family. As to quaternary structure, interacts with DDX39A. Interacts with FUS. Interacts (via the C-terminal domain) with DDX39B; the interaction is direct and facilitates RNA binding of DDX39B. Component of the transcription/export (TREX) complex at least composed of ALYREF/THOC4, DDX39B, SARNP/CIP29, CHTOP and the THO subcomplex; TREX seems to have dynamic structure involving ATP-dependent remodeling; in the complex interacts directly with DDX39B in a ATP-dependent manner which bridges it to ALYREF/THOC4. Low expression in spleen, liver, pancreas, testis, thymus, heart, and kidney. Increased levels are seen in hepatocellular carcinoma and pancreatic adenocarcinoma.

The protein localises to the nucleus. Its subcellular location is the nucleus speckle. Functionally, binds both single-stranded and double-stranded DNA with higher affinity for the single-stranded form. Specifically binds to scaffold/matrix attachment region DNA. Also binds single-stranded RNA. Enhances RNA unwinding activity of DDX39A. May participate in important transcriptional or translational control of cell growth, metabolism and carcinogenesis. Component of the TREX complex which is thought to couple mRNA transcription, processing and nuclear export, and specifically associates with spliced mRNA and not with unspliced pre-mRNA. The TREX complex is recruited to spliced mRNAs by a transcription-independent mechanism, binds to mRNA upstream of the exon-junction complex (EJC) and is recruited in a splicing- and cap-dependent manner to a region near the 5' end of the mRNA where it functions in mRNA export to the cytoplasm via the TAP/NXF1 pathway. Associates with DDX39B, which facilitates RNA binding of DDX39B and likely plays a role in mRNA export. In Homo sapiens (Human), this protein is SAP domain-containing ribonucleoprotein (SARNP).